The chain runs to 671 residues: Bifunctional acetylxylan esterase/xylanase XynS20E (671 aa).

Positions 1–19 are cleaved as a signal peptide; it reads MRLGVALSTIAVLLTATSA. The interval 54-279 is acetylxylan esterase; it reads QGAGRDIHVY…IQDIWDFVSQ (226 aa). The active-site Charge relay system is Ser152. Asn238 carries an N-linked (GlcNAc...) asparagine glycan. The tract at residues 285–328 is disordered; that stretch reads PVSASGNGGGNTTPTNPSTGGNGNGNGGGNTTPTNPSTGGNGNG. Gly residues predominate over residues 304-314; it reads GGNGNGNGGGN. CBM10 domains are found at residues 335–374 and 383–422; these read KCSS…CGCG and TCSA…CGCG. Asn339 carries an N-linked (GlcNAc...) asparagine glycan. 2 N-linked (GlcNAc...) asparagine glycosylation sites follow: Asn445 and Asn483. The 201-residue stretch at 461–661 folds into the GH11 domain; that stretch reads TVTSNKVGDI…NNGGTSGTAD (201 aa). Glu555 (nucleophile) is an active-site residue. Glu648 (proton donor) is an active-site residue.

It in the N-terminal section; belongs to the axeA family. In the C-terminal section; belongs to the glycosyl hydrolase 11 (cellulase G) family.

Its subcellular location is the secreted. It carries out the reaction Deacetylation of xylans and xylo-oligosaccharides.. The catalysed reaction is Endohydrolysis of (1-&gt;4)-beta-D-xylosidic linkages in xylans.. The protein operates within glycan degradation; xylan degradation. Functionally, bifunctional acetylxylan esterase/xylanase involved in the hydrolysis of xylan, a major structural heterogeneous polysaccharide found in plant biomass representing the second most abundant polysaccharide in the biosphere, after cellulose. Degrades xylan from acetylxylan, beechwood, birchwood, and oat spelt, and releases acetate from 4-methylumbelliferyl acetate and beta-D-xylose tetraacetate. No activity is observed against carboxy methyl cellulose, beta-glucan, p-nitrophenol acetate, p-nitrophenol laurate, p-nitrophenol myristate, p-nitrophenol, palmitate, or beta-naphthol acetate. The polypeptide is Bifunctional acetylxylan esterase/xylanase XynS20E (xynS20E) (Neocallimastix patriciarum (Rumen fungus)).